Reading from the N-terminus, the 1145-residue chain is Trafficking protein particle complex subunit 10 (1145 aa).

This sequence belongs to the TMEM1 family. In terms of assembly, part of the multisubunit TRAPP (transport protein particle) complex. Interacts with Shal (via C-terminal dendritic targeting motif). As to expression, co-expressed with Shal in the nervous system.

The protein resides in the golgi apparatus. It localises to the cis-Golgi network. The protein localises to the cell projection. Its subcellular location is the dendrite. It is found in the perikaryon. May play a role in vesicular transport from endoplasmic reticulum to Golgi. Has a role in one of the several mechanisms underlying dendritic localization of Shal channels. The protein is Trafficking protein particle complex subunit 10 (SIDL) of Drosophila melanogaster (Fruit fly).